A 168-amino-acid polypeptide reads, in one-letter code: 3-isopropylmalate dehydratase small subunit 2 (168 aa).

The protein belongs to the LeuD family. LeuD type 2 subfamily. In terms of assembly, heterodimer of LeuC and LeuD.

The catalysed reaction is (2R,3S)-3-isopropylmalate = (2S)-2-isopropylmalate. The protein operates within amino-acid biosynthesis; L-leucine biosynthesis; L-leucine from 3-methyl-2-oxobutanoate: step 2/4. Its function is as follows. Catalyzes the isomerization between 2-isopropylmalate and 3-isopropylmalate, via the formation of 2-isopropylmaleate. The protein is 3-isopropylmalate dehydratase small subunit 2 (leuD2) of Methanopyrus kandleri (strain AV19 / DSM 6324 / JCM 9639 / NBRC 100938).